A 60-amino-acid polypeptide reads, in one-letter code: UPF0434 protein PM0859 (60 aa).

Belongs to the UPF0434 family.

The polypeptide is UPF0434 protein PM0859 (Pasteurella multocida (strain Pm70)).